Reading from the N-terminus, the 252-residue chain is Carbohydrate deacetylase (252 aa).

His59 and His122 together coordinate Mg(2+).

Belongs to the YdjC deacetylase family. Homodimer. The cofactor is Mg(2+).

Probably catalyzes the deacetylation of acetylated carbohydrates an important step in the degradation of oligosaccharides. This Vibrio vulnificus (strain YJ016) protein is Carbohydrate deacetylase.